Consider the following 297-residue polypeptide: tRNA uridine(34) hydroxylase (297 aa).

Residues 133 to 228 form the Rhodanese domain; the sequence is SGDEVVFFDG…YGETFKDQGL (96 aa). Catalysis depends on C188, which acts as the Cysteine persulfide intermediate.

The protein belongs to the TrhO family.

It carries out the reaction uridine(34) in tRNA + AH2 + O2 = 5-hydroxyuridine(34) in tRNA + A + H2O. Catalyzes oxygen-dependent 5-hydroxyuridine (ho5U) modification at position 34 in tRNAs. The polypeptide is tRNA uridine(34) hydroxylase (Pseudarthrobacter chlorophenolicus (strain ATCC 700700 / DSM 12829 / CIP 107037 / JCM 12360 / KCTC 9906 / NCIMB 13794 / A6) (Arthrobacter chlorophenolicus)).